The primary structure comprises 585 residues: Protein-lysine N-methyltransferase EFM1 (585 aa).

In terms of domain architecture, SET spans Pro23–Gly281. Tyr280 serves as a coordination point for S-adenosyl-L-methionine.

The protein belongs to the class V-like SAM-binding methyltransferase superfamily. RKM1 family.

The protein localises to the cytoplasm. Functionally, S-adenosyl-L-methionine-dependent protein-lysine N-methyltransferase that monomethylates elongation factor 1-alpha (TEF1/TEF2) at 'Lys-30'. The polypeptide is Protein-lysine N-methyltransferase EFM1 (Saccharomyces cerevisiae (strain ATCC 204508 / S288c) (Baker's yeast)).